The chain runs to 261 residues: ATP synthase subunit a (261 aa).

6 helical membrane passes run 45 to 65 (ITNV…ILVL), 107 to 127 (VMTL…PLSF), 133 to 153 (MAVT…LGFM), 162 to 182 (MFWV…IEVI), 209 to 229 (IAGF…VTAI), and 232 to 252 (LELL…CVYL).

It belongs to the ATPase A chain family. In terms of assembly, F-type ATPases have 2 components, CF(1) - the catalytic core - and CF(0) - the membrane proton channel. CF(1) has five subunits: alpha(3), beta(3), gamma(1), delta(1), epsilon(1). CF(0) has four main subunits: a, b, b' and c.

The protein localises to the cell inner membrane. Key component of the proton channel; it plays a direct role in the translocation of protons across the membrane. This Cereibacter sphaeroides (strain ATCC 17025 / ATH 2.4.3) (Rhodobacter sphaeroides) protein is ATP synthase subunit a.